Here is a 156-residue protein sequence, read N- to C-terminus: Cyanate hydratase (156 aa).

Catalysis depends on residues Arg-96, Glu-99, and Ser-122.

It belongs to the cyanase family.

The enzyme catalyses cyanate + hydrogencarbonate + 3 H(+) = NH4(+) + 2 CO2. Catalyzes the reaction of cyanate with bicarbonate to produce ammonia and carbon dioxide. The chain is Cyanate hydratase from Mycobacteroides abscessus (strain ATCC 19977 / DSM 44196 / CCUG 20993 / CIP 104536 / JCM 13569 / NCTC 13031 / TMC 1543 / L948) (Mycobacterium abscessus).